Consider the following 151-residue polypeptide: Lipoprotein signal peptidase (151 aa).

Helical transmembrane passes span 3-23 (LYII…GWIV), 59-79 (WFFY…FYTS), and 85-107 (LYRI…RLHL). Active-site residues include D112 and D128. A helical transmembrane segment spans residues 123 to 143 (IFNVADTALTCGVICVFIAIL).

It belongs to the peptidase A8 family.

The protein localises to the cell membrane. It carries out the reaction Release of signal peptides from bacterial membrane prolipoproteins. Hydrolyzes -Xaa-Yaa-Zaa-|-(S,diacylglyceryl)Cys-, in which Xaa is hydrophobic (preferably Leu), and Yaa (Ala or Ser) and Zaa (Gly or Ala) have small, neutral side chains.. It participates in protein modification; lipoprotein biosynthesis (signal peptide cleavage). Functionally, this protein specifically catalyzes the removal of signal peptides from prolipoproteins. This Latilactobacillus sakei subsp. sakei (strain 23K) (Lactobacillus sakei subsp. sakei) protein is Lipoprotein signal peptidase.